Here is a 750-residue protein sequence, read N- to C-terminus: Polyribonucleotide nucleotidyltransferase (750 aa).

Residues Asp-492 and Asp-498 each contribute to the Mg(2+) site. In terms of domain architecture, KH spans 559–618 (PQLSVVEVNPEIIRVIIGPGGKNIKAITSATGASIDIEDSGRISIFAPTKESMDMAREMV). One can recognise an S1 motif domain in the interval 628–695 (GKNYTAKVRK…NDGRVRASRK (68 aa)). The segment at 705–750 (EWDPADTARPPRKPRDRDDRGDRGGRGDRGDRGGRNGRGGDRRDRR) is disordered. Positions 717–750 (KPRDRDDRGDRGGRGDRGDRGGRNGRGGDRRDRR) are enriched in basic and acidic residues.

Belongs to the polyribonucleotide nucleotidyltransferase family. Mg(2+) is required as a cofactor.

The protein resides in the cytoplasm. It carries out the reaction RNA(n+1) + phosphate = RNA(n) + a ribonucleoside 5'-diphosphate. Functionally, involved in mRNA degradation. Catalyzes the phosphorolysis of single-stranded polyribonucleotides processively in the 3'- to 5'-direction. The chain is Polyribonucleotide nucleotidyltransferase from Oleidesulfovibrio alaskensis (strain ATCC BAA-1058 / DSM 17464 / G20) (Desulfovibrio alaskensis).